We begin with the raw amino-acid sequence, 120 residues long: MKLFMVLVASFAFAVALPSKKREETAAENELTGDLQEAAQPMIYAVAFPEIRASCVIGWKQQGATCQRDCECCGVAATCITGDSSTGFCGYHQTPNALGQGILYTADTIKNGFSAIFCAG.

The N-terminal stretch at 1–16 (MKLFMVLVASFAFAVA) is a signal peptide. 4 disulfide bridges follow: C55/C73, C66/C79, C70/C118, and C72/C89.

Belongs to the neurotoxin 03 (Tx2) family. 03 subfamily. As to expression, expressed by the venom gland.

It is found in the secreted. Ion channel inhibitor. This chain is U15-barytoxin-Tl1c, found in Trittame loki (Brush-footed trapdoor spider).